The primary structure comprises 653 residues: Mannosyl-oligosaccharide 1,2-alpha-mannosidase IA (653 aa).

Residues 1 to 41 (MPVGGLLPLFSSPAGGVLGGGLGGGGGRKGSGPAALRLTEK) are Cytoplasmic-facing. The helical; Signal-anchor for type II membrane protein transmembrane segment at 42 to 62 (FVLLLVFSAFITLCFGAIFFL) threads the bilayer. Residues 63-653 (PDSSKLLSGV…DKKEVEIREE (591 aa)) lie on the Lumenal side of the membrane. Residues 81-116 (QPAADHKPGPGARAEDAAEGRARRREEGAPGDPEAA) are disordered. The span at 84–108 (ADHKPGPGARAEDAAEGRARRREEG) shows a compositional bias: basic and acidic residues. Cys476 and Cys508 are joined by a disulfide. An N-linked (GlcNAc...) asparagine glycan is attached at Asn513. The active-site Proton donor is Glu522.

Belongs to the glycosyl hydrolase 47 family. The cofactor is Ca(2+).

It is found in the golgi apparatus membrane. The catalysed reaction is N(4)-(alpha-D-Man-(1-&gt;2)-alpha-D-Man-(1-&gt;2)-alpha-D-Man-(1-&gt;3)-[alpha-D-Man-(1-&gt;2)-alpha-D-Man-(1-&gt;3)-[alpha-D-Man-(1-&gt;2)-alpha-D-Man-(1-&gt;6)]-alpha-D-Man-(1-&gt;6)]-beta-D-Man-(1-&gt;4)-beta-D-GlcNAc-(1-&gt;4)-beta-D-GlcNAc)-L-asparaginyl-[protein] (N-glucan mannose isomer 9A1,2,3B1,2,3) + 4 H2O = N(4)-(alpha-D-Man-(1-&gt;3)-[alpha-D-Man-(1-&gt;3)-[alpha-D-Man-(1-&gt;6)]-alpha-D-Man-(1-&gt;6)]-beta-D-Man-(1-&gt;4)-beta-D-GlcNAc-(1-&gt;4)-beta-D-GlcNAc)-L-asparaginyl-[protein] (N-glucan mannose isomer 5A1,2) + 4 beta-D-mannose. The enzyme catalyses N(4)-(alpha-D-Man-(1-&gt;2)-alpha-D-Man-(1-&gt;2)-alpha-D-Man-(1-&gt;3)-[alpha-D-Man-(1-&gt;3)-[alpha-D-Man-(1-&gt;2)-alpha-D-Man-(1-&gt;6)]-alpha-D-Man-(1-&gt;6)]-beta-D-Man-(1-&gt;4)-beta-D-GlcNAc-(1-&gt;4)-beta-D-GlcNAc)-L-asparaginyl-[protein] (N-glucan mannose isomer 8A1,2,3B1,3) + 3 H2O = N(4)-(alpha-D-Man-(1-&gt;3)-[alpha-D-Man-(1-&gt;3)-[alpha-D-Man-(1-&gt;6)]-alpha-D-Man-(1-&gt;6)]-beta-D-Man-(1-&gt;4)-beta-D-GlcNAc-(1-&gt;4)-beta-D-GlcNAc)-L-asparaginyl-[protein] (N-glucan mannose isomer 5A1,2) + 3 beta-D-mannose. Its pathway is protein modification; protein glycosylation. Its activity is regulated as follows. Inhibited by both 1-deoxymannojirimycin and kifunensine. Its function is as follows. Involved in the maturation of Asn-linked oligosaccharides. Progressively trim alpha-1,2-linked mannose residues from Man(9)GlcNAc(2) to produce Man(5)GlcNAc(2). In Homo sapiens (Human), this protein is Mannosyl-oligosaccharide 1,2-alpha-mannosidase IA (MAN1A1).